A 46-amino-acid polypeptide reads, in one-letter code: Protein PsbN (46 aa).

The chain crosses the membrane as a helical span at residues 7-27; the sequence is GLSIAITFAVILLALTGFSIY.

This sequence belongs to the PsbN family.

The protein resides in the cellular thylakoid membrane. Functionally, may play a role in photosystem I and II biogenesis. The sequence is that of Protein PsbN from Synechococcus elongatus (strain ATCC 33912 / PCC 7942 / FACHB-805) (Anacystis nidulans R2).